Consider the following 345-residue polypeptide: tRNA-specific 2-thiouridylase MnmA 1 (345 aa).

ATP is bound by residues 9–16 and Leu35; that span reads GMSGGIDS. Catalysis depends on Cys96, which acts as the Nucleophile. Cys96 and Cys191 are disulfide-bonded. Gly120 provides a ligand contact to ATP. An interaction with tRNA region spans residues 138-140; sequence KDQ. The Cysteine persulfide intermediate role is filled by Cys191. The tract at residues 293–294 is interaction with tRNA; the sequence is RY.

The protein belongs to the MnmA/TRMU family.

It is found in the cytoplasm. The enzyme catalyses S-sulfanyl-L-cysteinyl-[protein] + uridine(34) in tRNA + AH2 + ATP = 2-thiouridine(34) in tRNA + L-cysteinyl-[protein] + A + AMP + diphosphate + H(+). Catalyzes the 2-thiolation of uridine at the wobble position (U34) of tRNA, leading to the formation of s(2)U34. This chain is tRNA-specific 2-thiouridylase MnmA 1, found in Aliarcobacter butzleri (strain RM4018) (Arcobacter butzleri).